The following is a 241-amino-acid chain: Probable pectate lyase D (241 aa).

A signal peptide spans 1–17; the sequence is MYQKSLLFSLLATSALA. N215 carries N-linked (GlcNAc...) asparagine glycosylation. Residues 215-241 are disordered; that stretch reads NNSGDEPEEVSEGPSDACQYSEPLSSC.

The protein belongs to the polysaccharide lyase 3 family. Ca(2+) serves as cofactor.

Its subcellular location is the secreted. It carries out the reaction Eliminative cleavage of (1-&gt;4)-alpha-D-galacturonan to give oligosaccharides with 4-deoxy-alpha-D-galact-4-enuronosyl groups at their non-reducing ends.. Functionally, pectinolytic enzyme consist of four classes of enzymes: pectin lyase, polygalacturonase, pectin methylesterase and rhamnogalacturonase. Among pectinolytic enzymes, pectin lyase is the most important in depolymerization of pectin, since it cleaves internal glycosidic bonds of highly methylated pectins. Favors pectate, the anion, over pectin, the methyl ester. The sequence is that of Probable pectate lyase D (plyD) from Neosartorya fischeri (strain ATCC 1020 / DSM 3700 / CBS 544.65 / FGSC A1164 / JCM 1740 / NRRL 181 / WB 181) (Aspergillus fischerianus).